The primary structure comprises 231 residues: Large ribosomal subunit protein uL1 (231 aa).

Belongs to the universal ribosomal protein uL1 family. Part of the 50S ribosomal subunit.

Its function is as follows. Binds directly to 23S rRNA. The L1 stalk is quite mobile in the ribosome, and is involved in E site tRNA release. In terms of biological role, protein L1 is also a translational repressor protein, it controls the translation of the L11 operon by binding to its mRNA. The sequence is that of Large ribosomal subunit protein uL1 from Janthinobacterium sp. (strain Marseille) (Minibacterium massiliensis).